A 261-amino-acid chain; its full sequence is Phosphatidylglycerol--prolipoprotein diacylglyceryl transferase (261 aa).

The next 4 helical transmembrane spans lie at 17–37, 60–80, 92–112, and 121–141; these read FGIHWYGLMYLIGFLAFLWLG, ALFYGALGVILGGRLGYALFY, ILFLWQGGMSFHGGFLGVMVA, and GLTFFGIMDFVAPLVPVGLGA. R143 contacts a 1,2-diacyl-sn-glycero-3-phospho-(1'-sn-glycerol). Helical transmembrane passes span 175 to 195, 203 to 223, and 237 to 257; these read PSQLYEFLLEGVALFILLWWY, GSVSALFLIGYGSFRFLVEFT, and LSMGQWLSLPMVIAGVWLLIV.

It belongs to the Lgt family.

Its subcellular location is the cell inner membrane. The catalysed reaction is L-cysteinyl-[prolipoprotein] + a 1,2-diacyl-sn-glycero-3-phospho-(1'-sn-glycerol) = an S-1,2-diacyl-sn-glyceryl-L-cysteinyl-[prolipoprotein] + sn-glycerol 1-phosphate + H(+). It functions in the pathway protein modification; lipoprotein biosynthesis (diacylglyceryl transfer). Catalyzes the transfer of the diacylglyceryl group from phosphatidylglycerol to the sulfhydryl group of the N-terminal cysteine of a prolipoprotein, the first step in the formation of mature lipoproteins. The sequence is that of Phosphatidylglycerol--prolipoprotein diacylglyceryl transferase from Methylobacillus flagellatus (strain ATCC 51484 / DSM 6875 / VKM B-1610 / KT).